We begin with the raw amino-acid sequence, 649 residues long: Acetyl-coenzyme A synthetase (649 aa).

CoA-binding positions include 190-193 (RGGR) and Thr310. Residues 386-388 (GEP), 410-415 (DTWWQT), Asp499, and Arg514 each bind ATP. Ser522 is a binding site for CoA. Arg525 is a binding site for ATP. Positions 536, 538, and 541 each coordinate Mg(2+). CoA is bound at residue Arg583. Lys608 is modified (N6-acetyllysine).

It belongs to the ATP-dependent AMP-binding enzyme family. It depends on Mg(2+) as a cofactor. Post-translationally, acetylated. Deacetylation by the SIR2-homolog deacetylase activates the enzyme.

It catalyses the reaction acetate + ATP + CoA = acetyl-CoA + AMP + diphosphate. In terms of biological role, catalyzes the conversion of acetate into acetyl-CoA (AcCoA), an essential intermediate at the junction of anabolic and catabolic pathways. AcsA undergoes a two-step reaction. In the first half reaction, AcsA combines acetate with ATP to form acetyl-adenylate (AcAMP) intermediate. In the second half reaction, it can then transfer the acetyl group from AcAMP to the sulfhydryl group of CoA, forming the product AcCoA. The protein is Acetyl-coenzyme A synthetase of Methylorubrum extorquens (strain PA1) (Methylobacterium extorquens).